An 879-amino-acid polypeptide reads, in one-letter code: Pyruvate dehydrogenase phosphatase regulatory subunit, mitochondrial (879 aa).

The N-terminal 27 residues, 1–27 (MMFYRLLSIVGRQRASPGWQNWSSARN), are a transit peptide targeting the mitochondrion.

The protein belongs to the GcvT family. Heterodimer of a catalytic (PDP1) and a regulatory (PDPR) subunit.

It is found in the mitochondrion matrix. Functionally, decreases the sensitivity of PDP1 to magnesium ions, and this inhibition is reversed by the polyamine spermine. This is Pyruvate dehydrogenase phosphatase regulatory subunit, mitochondrial (PDPR) from Homo sapiens (Human).